The sequence spans 177 residues: Large ribosomal subunit protein uL6 (177 aa).

Belongs to the universal ribosomal protein uL6 family. In terms of assembly, part of the 50S ribosomal subunit.

This protein binds to the 23S rRNA, and is important in its secondary structure. It is located near the subunit interface in the base of the L7/L12 stalk, and near the tRNA binding site of the peptidyltransferase center. The chain is Large ribosomal subunit protein uL6 from Rhizobium etli (strain CIAT 652).